A 223-amino-acid chain; its full sequence is Putative 3-methyladenine DNA glycosylase (223 aa).

Belongs to the DNA glycosylase MPG family.

In Pseudomonas syringae pv. syringae (strain B728a), this protein is Putative 3-methyladenine DNA glycosylase.